Consider the following 372-residue polypeptide: Ketol-acid reductoisomerase (NADP(+)) (372 aa).

Residues 1 to 25 form a disordered region; sequence MTETKTQTETETDEEEGTDTDTALD. The span at 10 to 19 shows a compositional bias: acidic residues; it reads TETDEEEGTD. A KARI N-terminal Rossmann domain is found at 24 to 205; sequence LDTTIYYDDD…GCTRAGAIET (182 aa). NADP(+) is bound by residues 49 to 52, S75, S77, and 107 to 110; these read YGSQ and DTVQ. The active site involves H131. Position 157 (G157) interacts with NADP(+). A KARI C-terminal knotted domain is found at 206–351; the sequence is TFREETETDL…EPLRDLFAWS (146 aa). 4 residues coordinate Mg(2+): D214, E218, E250, and E254. A substrate-binding site is contributed by S275. Residues 351 to 372 form a disordered region; sequence SDNEETNDESDVVSEPEAAADD. Acidic residues predominate over residues 352-372; that stretch reads DNEETNDESDVVSEPEAAADD.

Belongs to the ketol-acid reductoisomerase family. It depends on Mg(2+) as a cofactor.

The catalysed reaction is (2R)-2,3-dihydroxy-3-methylbutanoate + NADP(+) = (2S)-2-acetolactate + NADPH + H(+). It catalyses the reaction (2R,3R)-2,3-dihydroxy-3-methylpentanoate + NADP(+) = (S)-2-ethyl-2-hydroxy-3-oxobutanoate + NADPH + H(+). The protein operates within amino-acid biosynthesis; L-isoleucine biosynthesis; L-isoleucine from 2-oxobutanoate: step 2/4. It functions in the pathway amino-acid biosynthesis; L-valine biosynthesis; L-valine from pyruvate: step 2/4. In terms of biological role, involved in the biosynthesis of branched-chain amino acids (BCAA). Catalyzes an alkyl-migration followed by a ketol-acid reduction of (S)-2-acetolactate (S2AL) to yield (R)-2,3-dihydroxy-isovalerate. In the isomerase reaction, S2AL is rearranged via a Mg-dependent methyl migration to produce 3-hydroxy-3-methyl-2-ketobutyrate (HMKB). In the reductase reaction, this 2-ketoacid undergoes a metal-dependent reduction by NADPH to yield (R)-2,3-dihydroxy-isovalerate. This Haloquadratum walsbyi (strain DSM 16790 / HBSQ001) protein is Ketol-acid reductoisomerase (NADP(+)).